We begin with the raw amino-acid sequence, 545 residues long: Glucose-6-phosphate isomerase (545 aa).

E351 functions as the Proton donor in the catalytic mechanism. Residues H382 and K510 contribute to the active site.

Belongs to the GPI family.

The protein localises to the cytoplasm. The enzyme catalyses alpha-D-glucose 6-phosphate = beta-D-fructose 6-phosphate. It functions in the pathway carbohydrate biosynthesis; gluconeogenesis. Its pathway is carbohydrate degradation; glycolysis; D-glyceraldehyde 3-phosphate and glycerone phosphate from D-glucose: step 2/4. In terms of biological role, catalyzes the reversible isomerization of glucose-6-phosphate to fructose-6-phosphate. The polypeptide is Glucose-6-phosphate isomerase (Shewanella halifaxensis (strain HAW-EB4)).